Reading from the N-terminus, the 644-residue chain is DNA gyrase subunit B (644 aa).

One can recognise a Toprim domain in the interval 429-543; that stretch reads CEIFLVEGDS…AGYVYIAQPP (115 aa). Mg(2+) is bound by residues Glu-435, Asp-508, and Asp-510.

Belongs to the type II topoisomerase GyrB family. Heterotetramer, composed of two GyrA and two GyrB chains. In the heterotetramer, GyrA contains the active site tyrosine that forms a transient covalent intermediate with DNA, while GyrB binds cofactors and catalyzes ATP hydrolysis. Mg(2+) is required as a cofactor. It depends on Mn(2+) as a cofactor. The cofactor is Ca(2+).

The protein localises to the cytoplasm. The catalysed reaction is ATP-dependent breakage, passage and rejoining of double-stranded DNA.. Functionally, a type II topoisomerase that negatively supercoils closed circular double-stranded (ds) DNA in an ATP-dependent manner to modulate DNA topology and maintain chromosomes in an underwound state. Negative supercoiling favors strand separation, and DNA replication, transcription, recombination and repair, all of which involve strand separation. Also able to catalyze the interconversion of other topological isomers of dsDNA rings, including catenanes and knotted rings. Type II topoisomerases break and join 2 DNA strands simultaneously in an ATP-dependent manner. This Staphylococcus aureus (strain COL) protein is DNA gyrase subunit B.